The chain runs to 475 residues: ESX-3 secretion system protein EccD3 (475 aa).

11 helical membrane passes run 132 to 152, 161 to 181, 186 to 206, 212 to 232, 241 to 261, 264 to 284, 333 to 353, 354 to 374, 384 to 404, 409 to 429, and 453 to 473; these read IARG…GLSV, LLGQ…ALAV, AVLA…AFAL, FGAP…LISM, IAVF…AGAA, WVIS…IVTV, GVIA…VSSA, NASP…ALRA, AWLL…FVIG, AALW…VAAL, and GLDA…SLVL.

It belongs to the EccD/Snm4 family. In terms of assembly, part of the ESX-3 / type VII secretion system (T7SS), which is composed of cytosolic and membrane components. The ESX-3 membrane complex is composed of EccB3, EccC3, EccD3 and EccE3.

It is found in the cell inner membrane. Its function is as follows. Part of the ESX-3 specialized secretion system, which is required for siderophore-mediated iron acquisition and for the secretion of EsxH and EsxG. The protein is ESX-3 secretion system protein EccD3 of Mycolicibacterium smegmatis (strain ATCC 700084 / mc(2)155) (Mycobacterium smegmatis).